The chain runs to 1070 residues: Carbamoyl phosphate synthase large chain (1070 aa).

Residues 1–401 (MPKRDDIKTI…ALLKAVRSLE (401 aa)) form a carboxyphosphate synthetic domain region. Positions 129, 169, 175, 176, 208, 210, 215, 241, 242, 243, 284, and 298 each coordinate ATP. The region spanning 133–327 (RDLMNELGEP…IAKLAAKIAV (195 aa)) is the ATP-grasp 1 domain. Residues Gln284, Glu298, and Asn300 each contribute to the Mg(2+) site. Positions 284, 298, and 300 each coordinate Mn(2+). The oligomerization domain stretch occupies residues 402 to 546 (VGADHLLLEE…YSTYEEENES (145 aa)). Positions 547–929 (TRSAKESVIV…ALYKGFVASG (383 aa)) are carbamoyl phosphate synthetic domain. The ATP-grasp 2 domain maps to 671–861 (EKALEILQIP…MANVATRVIL (191 aa)). Residues Arg707, Arg746, Val748, Glu752, Gly777, Val778, His779, Ser780, Gln820, and Glu832 each coordinate ATP. Gln820, Glu832, and Asn834 together coordinate Mg(2+). Residues Gln820, Glu832, and Asn834 each coordinate Mn(2+). Positions 930–1070 (TTMHDYGTVL…SEVKQPKVRV (141 aa)) constitute an MGS-like domain. Residues 930–1070 (TTMHDYGTVL…SEVKQPKVRV (141 aa)) form an allosteric domain region.

The protein belongs to the CarB family. As to quaternary structure, composed of two chains; the small (or glutamine) chain promotes the hydrolysis of glutamine to ammonia, which is used by the large (or ammonia) chain to synthesize carbamoyl phosphate. Tetramer of heterodimers (alpha,beta)4. Mg(2+) serves as cofactor. The cofactor is Mn(2+).

It catalyses the reaction hydrogencarbonate + L-glutamine + 2 ATP + H2O = carbamoyl phosphate + L-glutamate + 2 ADP + phosphate + 2 H(+). The catalysed reaction is hydrogencarbonate + NH4(+) + 2 ATP = carbamoyl phosphate + 2 ADP + phosphate + 2 H(+). It participates in amino-acid biosynthesis; L-arginine biosynthesis; carbamoyl phosphate from bicarbonate: step 1/1. It functions in the pathway pyrimidine metabolism; UMP biosynthesis via de novo pathway; (S)-dihydroorotate from bicarbonate: step 1/3. Its function is as follows. Large subunit of the glutamine-dependent carbamoyl phosphate synthetase (CPSase). CPSase catalyzes the formation of carbamoyl phosphate from the ammonia moiety of glutamine, carbonate, and phosphate donated by ATP, constituting the first step of 2 biosynthetic pathways, one leading to arginine and/or urea and the other to pyrimidine nucleotides. The large subunit (synthetase) binds the substrates ammonia (free or transferred from glutamine from the small subunit), hydrogencarbonate and ATP and carries out an ATP-coupled ligase reaction, activating hydrogencarbonate by forming carboxy phosphate which reacts with ammonia to form carbamoyl phosphate. The sequence is that of Carbamoyl phosphate synthase large chain from Listeria welshimeri serovar 6b (strain ATCC 35897 / DSM 20650 / CCUG 15529 / CIP 8149 / NCTC 11857 / SLCC 5334 / V8).